Reading from the N-terminus, the 392-residue chain is Phospho-N-acetylmuramoyl-pentapeptide-transferase (392 aa).

Helical transmembrane passes span 28–48 (RALMAAMTALLIGLLAGPFVI), 76–96 (TMGGVLILLAIGISTLLWFDL), 100–120 (FVWIVLLVTLGFGAIGWVDDW), 137–157 (YLWQSVVGLIAALYLVFSISE), 193–213 (ISYPLGVFGFVILTYLVIVGS), 225–245 (GLAIMPVVMVGSSLGVFAYVT), 262–282 (SGELLIFCAAMAGSGLAFLWF), 289–309 (VFMGDVGALALGAALGTIAVI), 314–334 (IVLAIMGGIFVVEALSVMLQV), and 369–389 (QVVVRFWIITMLLCLVGLSTL).

Belongs to the glycosyltransferase 4 family. MraY subfamily. Requires Mg(2+) as cofactor.

Its subcellular location is the cell inner membrane. The enzyme catalyses UDP-N-acetyl-alpha-D-muramoyl-L-alanyl-gamma-D-glutamyl-meso-2,6-diaminopimeloyl-D-alanyl-D-alanine + di-trans,octa-cis-undecaprenyl phosphate = di-trans,octa-cis-undecaprenyl diphospho-N-acetyl-alpha-D-muramoyl-L-alanyl-D-glutamyl-meso-2,6-diaminopimeloyl-D-alanyl-D-alanine + UMP. The protein operates within cell wall biogenesis; peptidoglycan biosynthesis. Functionally, catalyzes the initial step of the lipid cycle reactions in the biosynthesis of the cell wall peptidoglycan: transfers peptidoglycan precursor phospho-MurNAc-pentapeptide from UDP-MurNAc-pentapeptide onto the lipid carrier undecaprenyl phosphate, yielding undecaprenyl-pyrophosphoryl-MurNAc-pentapeptide, known as lipid I. The protein is Phospho-N-acetylmuramoyl-pentapeptide-transferase of Polaromonas naphthalenivorans (strain CJ2).